Consider the following 2071-residue polypeptide: GTPase-activating protein BEM2 (2071 aa).

2 disordered regions span residues 1–115 (MPLK…QAHK) and 171–195 (AAPAREGRYSHQPTASLSSIGSERP). 2 stretches are compositionally biased toward low complexity: residues 16–31 (PQSCASKPSSASQSSC) and 42–55 (SSISSNSSPNSKNN). A compositionally biased stretch (polar residues) spans 62–80 (SNGSVYSDETTLKTAQTHY). The span at 81–110 (TQQGQQAKPQQHTQQQQQQPQTPMQLQVPT) shows a compositional bias: low complexity. Positions 181–191 (HQPTASLSSIG) are enriched in polar residues. Residues 471 to 738 (DTEKVANQIH…MEMSLKMEPP (268 aa)) form the Ras-GEF domain. Over residues 787 to 811 (PSTKNNNSSQASNRISQLSVNSTPH) the composition is skewed to polar residues. 3 disordered regions span residues 787 to 819 (PSTKNNNSSQASNRISQLSVNSTPHSNASSSSA), 1645 to 1676 (RSVLIQHPNKVSVSSASSSVSGSSSGSTARTS), and 1702 to 1738 (SVSSRSSVISNTATATSPASGASPNQTSTSHHGGMGK). 2 stretches are compositionally biased toward low complexity: residues 1656–1676 (SVSSASSSVSGSSSGSTARTS) and 1702–1726 (SVSSRSSVISNTATATSPASGASPN). One can recognise a PH domain in the interval 1751 to 1853 (SGFTSSSSQY…WMKAITLSKR (103 aa)). One can recognise a Rho-GAP domain in the interval 1872–2070 (VPVEDVCERE…HLIRNPEHYF (199 aa)).

Its function is as follows. GTPase-activating protein (GAP) for RHO proteins. Required for polarized growth and maintenance of cell polarity. This is GTPase-activating protein BEM2 (BEM2) from Eremothecium gossypii (strain ATCC 10895 / CBS 109.51 / FGSC 9923 / NRRL Y-1056) (Yeast).